The chain runs to 221 residues: Thiamine-phosphate synthase (221 aa).

4-amino-2-methyl-5-(diphosphooxymethyl)pyrimidine is bound by residues 49-53 and Asn-85; that span reads QFREK. Mg(2+) is bound by residues Asp-86 and Asp-105. 4-amino-2-methyl-5-(diphosphooxymethyl)pyrimidine is bound at residue Ser-124. Residue 151 to 153 participates in 2-[(2R,5Z)-2-carboxy-4-methylthiazol-5(2H)-ylidene]ethyl phosphate binding; sequence TQS. 4-amino-2-methyl-5-(diphosphooxymethyl)pyrimidine is bound at residue Lys-154. Residues Gly-183 and 203–204 each bind 2-[(2R,5Z)-2-carboxy-4-methylthiazol-5(2H)-ylidene]ethyl phosphate; that span reads IS.

The protein belongs to the thiamine-phosphate synthase family. It depends on Mg(2+) as a cofactor.

The enzyme catalyses 2-[(2R,5Z)-2-carboxy-4-methylthiazol-5(2H)-ylidene]ethyl phosphate + 4-amino-2-methyl-5-(diphosphooxymethyl)pyrimidine + 2 H(+) = thiamine phosphate + CO2 + diphosphate. It carries out the reaction 2-(2-carboxy-4-methylthiazol-5-yl)ethyl phosphate + 4-amino-2-methyl-5-(diphosphooxymethyl)pyrimidine + 2 H(+) = thiamine phosphate + CO2 + diphosphate. The catalysed reaction is 4-methyl-5-(2-phosphooxyethyl)-thiazole + 4-amino-2-methyl-5-(diphosphooxymethyl)pyrimidine + H(+) = thiamine phosphate + diphosphate. It participates in cofactor biosynthesis; thiamine diphosphate biosynthesis; thiamine phosphate from 4-amino-2-methyl-5-diphosphomethylpyrimidine and 4-methyl-5-(2-phosphoethyl)-thiazole: step 1/1. Its function is as follows. Condenses 4-methyl-5-(beta-hydroxyethyl)thiazole monophosphate (THZ-P) and 2-methyl-4-amino-5-hydroxymethyl pyrimidine pyrophosphate (HMP-PP) to form thiamine monophosphate (TMP). This Histophilus somni (strain 129Pt) (Haemophilus somnus) protein is Thiamine-phosphate synthase.